Consider the following 179-residue polypeptide: ATP synthase subunit delta (179 aa).

The protein belongs to the ATPase delta chain family. As to quaternary structure, F-type ATPases have 2 components, F(1) - the catalytic core - and F(0) - the membrane proton channel. F(1) has five subunits: alpha(3), beta(3), gamma(1), delta(1), epsilon(1). F(0) has three main subunits: a(1), b(2) and c(10-14). The alpha and beta chains form an alternating ring which encloses part of the gamma chain. F(1) is attached to F(0) by a central stalk formed by the gamma and epsilon chains, while a peripheral stalk is formed by the delta and b chains.

The protein localises to the cell membrane. Its function is as follows. F(1)F(0) ATP synthase produces ATP from ADP in the presence of a proton or sodium gradient. F-type ATPases consist of two structural domains, F(1) containing the extramembraneous catalytic core and F(0) containing the membrane proton channel, linked together by a central stalk and a peripheral stalk. During catalysis, ATP synthesis in the catalytic domain of F(1) is coupled via a rotary mechanism of the central stalk subunits to proton translocation. This protein is part of the stalk that links CF(0) to CF(1). It either transmits conformational changes from CF(0) to CF(1) or is implicated in proton conduction. The protein is ATP synthase subunit delta of Clostridium beijerinckii (strain ATCC 51743 / NCIMB 8052) (Clostridium acetobutylicum).